We begin with the raw amino-acid sequence, 243 residues long: 3-deoxy-manno-octulosonate cytidylyltransferase (243 aa).

It belongs to the KdsB family.

It is found in the cytoplasm. It carries out the reaction 3-deoxy-alpha-D-manno-oct-2-ulosonate + CTP = CMP-3-deoxy-beta-D-manno-octulosonate + diphosphate. Its pathway is nucleotide-sugar biosynthesis; CMP-3-deoxy-D-manno-octulosonate biosynthesis; CMP-3-deoxy-D-manno-octulosonate from 3-deoxy-D-manno-octulosonate and CTP: step 1/1. It participates in bacterial outer membrane biogenesis; lipopolysaccharide biosynthesis. Activates KDO (a required 8-carbon sugar) for incorporation into bacterial lipopolysaccharide in Gram-negative bacteria. In Bartonella quintana (strain Toulouse) (Rochalimaea quintana), this protein is 3-deoxy-manno-octulosonate cytidylyltransferase.